The sequence spans 59 residues: UPF0391 membrane protein Geob_0344 (59 aa).

2 helical membrane-spanning segments follow: residues 4 to 24 (WAAI…TGIA) and 33 to 53 (FLFI…ITAG).

The protein belongs to the UPF0391 family.

The protein resides in the cell membrane. In Geotalea daltonii (strain DSM 22248 / JCM 15807 / FRC-32) (Geobacter daltonii), this protein is UPF0391 membrane protein Geob_0344.